Reading from the N-terminus, the 434-residue chain is GTPase Obg (434 aa).

The 159-residue stretch at 2–160 (PTFVDQTKIE…RVLRLELKLL (159 aa)) folds into the Obg domain. Residues 161–334 (ADVGLVGFPS…LMNDTATLVE (174 aa)) enclose the OBG-type G domain. GTP contacts are provided by residues 167-174 (GFPSVGKS), 192-196 (FTTLT), 214-217 (DLPG), 284-287 (SQMD), and 315-317 (SSV). Residues Ser-174 and Thr-194 each contribute to the Mg(2+) site. In terms of domain architecture, OCT spans 356–434 (YKAPQKNEFT…IGKFVFEFVQ (79 aa)).

It belongs to the TRAFAC class OBG-HflX-like GTPase superfamily. OBG GTPase family. As to quaternary structure, monomer. Requires Mg(2+) as cofactor.

The protein localises to the cytoplasm. Functionally, an essential GTPase which binds GTP, GDP and possibly (p)ppGpp with moderate affinity, with high nucleotide exchange rates and a fairly low GTP hydrolysis rate. Plays a role in control of the cell cycle, stress response, ribosome biogenesis and in those bacteria that undergo differentiation, in morphogenesis control. The sequence is that of GTPase Obg from Lactobacillus helveticus (strain DPC 4571).